The primary structure comprises 504 residues: Anaerobic nitric oxide reductase transcription regulator NorR (504 aa).

Asp-57 carries the 4-aspartylphosphate modification. In terms of domain architecture, Sigma-54 factor interaction spans 187-416; sequence MIGLSPGMTQ…LEHAIHRAVV (230 aa). Residues 215 to 222 and 278 to 287 each bind ATP; these read GETGTGKE and ADNGTLFLDE. The segment at residues 479–498 is a DNA-binding region (H-T-H motif); sequence WAACARMLETDVANLHRLAK.

The protein operates within nitrogen metabolism; nitric oxide reduction. In terms of biological role, required for the expression of anaerobic nitric oxide (NO) reductase, acts as a transcriptional activator for at least the norVW operon. Activation also requires sigma-54. This is Anaerobic nitric oxide reductase transcription regulator NorR from Escherichia coli O45:K1 (strain S88 / ExPEC).